The following is a 241-amino-acid chain: Uridylate kinase (241 aa).

ATP is bound at residue 15–18 (KLSG). The tract at residues 23 to 28 (GSEGFG) is involved in allosteric activation by GTP. Residue G57 participates in UMP binding. ATP-binding residues include G58 and R62. UMP-binding positions include D77 and 138–145 (TGNPFCTT). ATP contacts are provided by T165, Y171, and D174.

This sequence belongs to the UMP kinase family. In terms of assembly, homohexamer.

The protein resides in the cytoplasm. It catalyses the reaction UMP + ATP = UDP + ADP. It functions in the pathway pyrimidine metabolism; CTP biosynthesis via de novo pathway; UDP from UMP (UMPK route): step 1/1. With respect to regulation, allosterically activated by GTP. Inhibited by UTP. Functionally, catalyzes the reversible phosphorylation of UMP to UDP. In Shewanella amazonensis (strain ATCC BAA-1098 / SB2B), this protein is Uridylate kinase.